The primary structure comprises 88 residues: Carboxysome shell vertex protein CsoS4A (88 aa).

Positions 1–76 (MLICKVLKPL…SDLTIVGIID (76 aa)) constitute a BMV domain.

It belongs to the CcmL/EutN family. CsoS4 subfamily. Homopentamer.

The protein localises to the carboxysome. Probably forms vertices in the carboxysome, a polyhedral inclusion where RuBisCO (ribulose bisphosphate carboxylase, cbbL-cbbS) is sequestered. Has been modeled to induce curvature upon insertion into an otherwise flat hexagonal layer of major carboxysome subunits. Has not been identified in purified carboxysomes; it is expected to be present in very low amounts. The polypeptide is Carboxysome shell vertex protein CsoS4A (Prochlorococcus marinus subsp. pastoris (strain CCMP1986 / NIES-2087 / MED4)).